The primary structure comprises 83 residues: Evasin P1124 (83 aa).

The N-terminal stretch at 1-28 is a signal peptide; that stretch reads MAVNVFTILQLAVFAAIVLNVNLHSVSA. 3 cysteine pairs are disulfide-bonded: Cys48-Cys66, Cys52-Cys68, and Cys62-Cys79. Asn51 is a glycosylation site (N-linked (GlcNAc...) asparagine).

The protein localises to the secreted. Salivary chemokine-binding protein which binds to host chemokines CXCL1, CXCL2, CXCL3, CXCL5, CXCL6, CXCL12 and CXCL13. In Ixodes ricinus (Common tick), this protein is Evasin P1124.